The chain runs to 275 residues: 2'-N-acetylparomamine deacetylase (275 aa).

His-14, Asp-17, and His-166 together coordinate Zn(2+).

This sequence belongs to the PIGL family. Zn(2+) serves as cofactor.

It carries out the reaction 2'-N-acetylparomamine + H2O = paromamine + acetate. It functions in the pathway antibiotic biosynthesis; butirosin biosynthesis. In terms of biological role, deacetylase involved in the biosynthesis of butirosin by mediating deacetylation of 2'-N-acetylparomamine. The polypeptide is 2'-N-acetylparomamine deacetylase (btrD) (Niallia circulans (Bacillus circulans)).